The following is an 89-amino-acid chain: MRLLTLTEYCLLIFFTGFYLAVTGFTAKDIGLYIGIALIYIFSHIFSKRLLEKRGKENKQVHLFFSVLAIIGSVFITVLCIALVASFSK.

3 helical membrane-spanning segments follow: residues 5–27, 32–51, and 63–85; these read TLTE…GFTA, LYIG…KRLL, and LFFS…ALVA.

The protein localises to the cell membrane. This is an uncharacterized protein from Bacillus subtilis (strain 168).